The following is a 138-amino-acid chain: Small ribosomal subunit protein uS12 (138 aa).

A disordered region spans residues 33-55 (KEHTNVSSPQKRGVCTRVGTMTP). A 3-methylthioaspartic acid modification is found at D102.

The protein belongs to the universal ribosomal protein uS12 family. As to quaternary structure, part of the 30S ribosomal subunit. Contacts proteins S8 and S17. May interact with IF1 in the 30S initiation complex.

In terms of biological role, with S4 and S5 plays an important role in translational accuracy. Its function is as follows. Interacts with and stabilizes bases of the 16S rRNA that are involved in tRNA selection in the A site and with the mRNA backbone. Located at the interface of the 30S and 50S subunits, it traverses the body of the 30S subunit contacting proteins on the other side and probably holding the rRNA structure together. The combined cluster of proteins S8, S12 and S17 appears to hold together the shoulder and platform of the 30S subunit. In Bacillus licheniformis (strain ATCC 14580 / DSM 13 / JCM 2505 / CCUG 7422 / NBRC 12200 / NCIMB 9375 / NCTC 10341 / NRRL NRS-1264 / Gibson 46), this protein is Small ribosomal subunit protein uS12.